The chain runs to 83 residues: Small ribosomal subunit protein bS16 (83 aa).

It belongs to the bacterial ribosomal protein bS16 family.

This chain is Small ribosomal subunit protein bS16, found in Magnetococcus marinus (strain ATCC BAA-1437 / JCM 17883 / MC-1).